Reading from the N-terminus, the 68-residue chain is MEC1-mediated checkpoint protein HUG1 (68 aa).

It localises to the cytoplasm. The protein localises to the nucleus. Involved in the MEC1-mediated checkpoint response to DNA damage and replication arrest. This is MEC1-mediated checkpoint protein HUG1 (HUG1) from Saccharomyces cerevisiae (strain ATCC 204508 / S288c) (Baker's yeast).